The sequence spans 136 residues: Large ribosomal subunit protein uL16 (136 aa).

The protein belongs to the universal ribosomal protein uL16 family. As to quaternary structure, part of the 50S ribosomal subunit.

Binds 23S rRNA and is also seen to make contacts with the A and possibly P site tRNAs. The protein is Large ribosomal subunit protein uL16 of Salmonella agona (strain SL483).